The sequence spans 260 residues: Malonyl-[acyl-carrier protein] O-methyltransferase (260 aa).

This sequence belongs to the methyltransferase superfamily.

It catalyses the reaction malonyl-[ACP] + S-adenosyl-L-methionine = malonyl-[ACP] methyl ester + S-adenosyl-L-homocysteine. Its pathway is cofactor biosynthesis; biotin biosynthesis. Converts the free carboxyl group of a malonyl-thioester to its methyl ester by transfer of a methyl group from S-adenosyl-L-methionine (SAM). It allows to synthesize pimeloyl-ACP via the fatty acid synthetic pathway. The protein is Malonyl-[acyl-carrier protein] O-methyltransferase of Herminiimonas arsenicoxydans.